Here is a 339-residue protein sequence, read N- to C-terminus: Phosphatidylglycerol--prolipoprotein diacylglyceryl transferase (339 aa).

A run of 3 helical transmembrane segments spans residues 43-63, 81-101, and 121-141; these read FTIAWYGVLMMLGIAAGYWLG, ILWMLFWGFVGARLVFVLTSW, and NGGISIHGGLIGGVLTLIYFA. Residue R167 participates in a 1,2-diacyl-sn-glycero-3-phospho-(1'-sn-glycerol) binding. Helical transmembrane passes span 231–251 and 300–320; these read FTQLYGVIIGIILAVASYFWL and LWTDTQIFSVPLILVSLWMLW.

Belongs to the Lgt family.

The protein localises to the cell membrane. It catalyses the reaction L-cysteinyl-[prolipoprotein] + a 1,2-diacyl-sn-glycero-3-phospho-(1'-sn-glycerol) = an S-1,2-diacyl-sn-glyceryl-L-cysteinyl-[prolipoprotein] + sn-glycerol 1-phosphate + H(+). Its pathway is protein modification; lipoprotein biosynthesis (diacylglyceryl transfer). Catalyzes the transfer of the diacylglyceryl group from phosphatidylglycerol to the sulfhydryl group of the N-terminal cysteine of a prolipoprotein, the first step in the formation of mature lipoproteins. The protein is Phosphatidylglycerol--prolipoprotein diacylglyceryl transferase of Deinococcus radiodurans (strain ATCC 13939 / DSM 20539 / JCM 16871 / CCUG 27074 / LMG 4051 / NBRC 15346 / NCIMB 9279 / VKM B-1422 / R1).